Reading from the N-terminus, the 160-residue chain is NADH-quinone oxidoreductase subunit I (160 aa).

2 4Fe-4S ferredoxin-type domains span residues R51–A80 and T91–N120. Residues C60, C63, C66, C70, C100, C103, C106, and C110 each contribute to the [4Fe-4S] cluster site.

This sequence belongs to the complex I 23 kDa subunit family. In terms of assembly, NDH-1 is composed of 14 different subunits. Subunits NuoA, H, J, K, L, M, N constitute the membrane sector of the complex. Requires [4Fe-4S] cluster as cofactor.

Its subcellular location is the cell inner membrane. It carries out the reaction a quinone + NADH + 5 H(+)(in) = a quinol + NAD(+) + 4 H(+)(out). Its function is as follows. NDH-1 shuttles electrons from NADH, via FMN and iron-sulfur (Fe-S) centers, to quinones in the respiratory chain. The immediate electron acceptor for the enzyme in this species is believed to be ubiquinone. Couples the redox reaction to proton translocation (for every two electrons transferred, four hydrogen ions are translocated across the cytoplasmic membrane), and thus conserves the redox energy in a proton gradient. The protein is NADH-quinone oxidoreductase subunit I of Neorickettsia sennetsu (strain ATCC VR-367 / Miyayama) (Ehrlichia sennetsu).